The sequence spans 975 residues: Translation initiation factor IF-2 (975 aa).

Composition is skewed to basic and acidic residues over residues 48–63 (DHLRKSHGATDGDKRK) and 120–177 (AELK…EAAA). Disordered regions lie at residues 48–85 (DHLRKSHGATDGDKRKITLTRRHTSEIKQADATGKART) and 98–390 (KRDD…PTEP). Low complexity predominate over residues 178 to 211 (KRAAAAQAEAAQQAAAAREQAQRAQSEPAEQSAQ). A compositionally biased stretch (basic and acidic residues) spans 212–263 (DEARAAAERAAQREAAKKAEDAAREAADKARAEQEEIRKRREAAEAEARAIR). A compositionally biased stretch (low complexity) spans 302–330 (KPAGEAAAARPAAKKPASGAPAPAAAPAG). The span at 359-372 (SSGGVDRGWRGGPK) shows a compositional bias: gly residues. The tr-type G domain maps to 475 to 644 (PRPPVVTVMG…LLQAEVLELK (170 aa)). Residues 484-491 (GHVDHGKT) are G1. A GTP-binding site is contributed by 484-491 (GHVDHGKT). Residues 509–513 (GITQH) form a G2 region. The segment at 530-533 (DTPG) is G3. Residues 530 to 534 (DTPGH) and 584 to 587 (NKID) each bind GTP. The interval 584-587 (NKID) is G4. The segment at 620–622 (SAK) is G5.

This sequence belongs to the TRAFAC class translation factor GTPase superfamily. Classic translation factor GTPase family. IF-2 subfamily.

It localises to the cytoplasm. In terms of biological role, one of the essential components for the initiation of protein synthesis. Protects formylmethionyl-tRNA from spontaneous hydrolysis and promotes its binding to the 30S ribosomal subunits. Also involved in the hydrolysis of GTP during the formation of the 70S ribosomal complex. This is Translation initiation factor IF-2 from Burkholderia pseudomallei (strain 1106a).